The primary structure comprises 217 residues: Octanoyltransferase (217 aa).

The BPL/LPL catalytic domain occupies 32 to 207 (NDSPDELWIV…TLSQLLGYQH (176 aa)). Residues 71–78 (RGGQVTYH), 138–140 (SLG), and 151–153 (GLA) contribute to the substrate site. Cys169 acts as the Acyl-thioester intermediate in catalysis.

Belongs to the LipB family.

Its subcellular location is the cytoplasm. The catalysed reaction is octanoyl-[ACP] + L-lysyl-[protein] = N(6)-octanoyl-L-lysyl-[protein] + holo-[ACP] + H(+). The protein operates within protein modification; protein lipoylation via endogenous pathway; protein N(6)-(lipoyl)lysine from octanoyl-[acyl-carrier-protein]: step 1/2. Catalyzes the transfer of endogenously produced octanoic acid from octanoyl-acyl-carrier-protein onto the lipoyl domains of lipoate-dependent enzymes. Lipoyl-ACP can also act as a substrate although octanoyl-ACP is likely to be the physiological substrate. The protein is Octanoyltransferase of Shewanella oneidensis (strain ATCC 700550 / JCM 31522 / CIP 106686 / LMG 19005 / NCIMB 14063 / MR-1).